The sequence spans 280 residues: Rhomboid-like protein 11, chloroplastic (280 aa).

A chloroplast-targeting transit peptide spans 1-57; that stretch reads MSQLLHLHRLSLPQSSLRFRFPPLHRRRAASSPTNSTQPPLQFRPLTVSRSQITCRF. At 58-82 the chain is on the stromal side; that stretch reads SQSDITPQFELDKAKDNRKPQKRAN. The helical transmembrane segment at 83-103 threads the bilayer; sequence GIFWIILINLGIYLADHFFQV. Topologically, residues 104 to 117 are chloroplast intermembrane; sequence RGIKSLYLYHNFPA. Residues 118 to 140 traverse the membrane as a helical segment; that stretch reads WYQFVTATFCHANWNHLSSNLFF. The Stromal segment spans residues 141–154; that stretch reads LYIFGKLVEEEEGN. Residues 155-175 form a helical membrane-spanning segment; it reads FGLWLSYLFTGVGANLVSWLV. Residues 176–178 lie on the Chloroplast intermembrane side of the membrane; the sequence is LPR. Residues 179–199 traverse the membrane as a helical segment; the sequence is NAVSVGASGAVFGLFAISVLV. The active-site Nucleophile is the Ser186. The Stromal segment spans residues 200–243; it reads KMSWDWRKILEVLILGQFVIERVMEAAQASAGLSGTIYGGYSLQ. A helical membrane pass occupies residues 244–264; the sequence is TVNHIAHLSGALVGVVLVWLL. Residue His250 is the Charge relay system of the active site. Over 265-280 the chain is Chloroplast intermembrane; sequence SKFPSASMDQDVKKSS.

It belongs to the peptidase S54 family. As to quaternary structure, homooligomer.

It localises to the plastid. Its subcellular location is the chloroplast inner membrane. In terms of biological role, rhomboid-type serine protease that catalyzes intramembrane proteolysis. May be involved in TIC22 processing during its import. This is Rhomboid-like protein 11, chloroplastic from Arabidopsis thaliana (Mouse-ear cress).